We begin with the raw amino-acid sequence, 734 residues long: Transcriptional regulator AacuB (734 aa).

Residues Cys26–Cys52 constitute a DNA-binding region (zn(2)-C6 fungal-type). Positions Phe86–Leu107 are enriched in basic and acidic residues. The disordered stretch occupies residues Phe86–Lys122.

The protein localises to the nucleus. Transcriptional regulator; part of the gene cluster that mediates the biosynthesis of the tetrahydroxanthone dimer secalonic acid D. This is Transcriptional regulator AacuB from Aspergillus aculeatus (strain ATCC 16872 / CBS 172.66 / WB 5094).